The primary structure comprises 481 residues: Proline--tRNA ligase (481 aa).

Belongs to the class-II aminoacyl-tRNA synthetase family. ProS type 3 subfamily. As to quaternary structure, homodimer.

It is found in the cytoplasm. It carries out the reaction tRNA(Pro) + L-proline + ATP = L-prolyl-tRNA(Pro) + AMP + diphosphate. Catalyzes the attachment of proline to tRNA(Pro) in a two-step reaction: proline is first activated by ATP to form Pro-AMP and then transferred to the acceptor end of tRNA(Pro). The polypeptide is Proline--tRNA ligase (Chloroherpeton thalassium (strain ATCC 35110 / GB-78)).